The chain runs to 437 residues: Enolase (437 aa).

Q162 lines the (2R)-2-phosphoglycerate pocket. The active-site Proton donor is the E204. Residues D251, E297, and D324 each coordinate Mg(2+). Residues K349, R378, S379, and K400 each contribute to the (2R)-2-phosphoglycerate site. K349 (proton acceptor) is an active-site residue.

Belongs to the enolase family. Requires Mg(2+) as cofactor.

It is found in the cytoplasm. The protein resides in the secreted. It localises to the cell surface. It carries out the reaction (2R)-2-phosphoglycerate = phosphoenolpyruvate + H2O. It participates in carbohydrate degradation; glycolysis; pyruvate from D-glyceraldehyde 3-phosphate: step 4/5. In terms of biological role, catalyzes the reversible conversion of 2-phosphoglycerate (2-PG) into phosphoenolpyruvate (PEP). It is essential for the degradation of carbohydrates via glycolysis. The protein is Enolase of Pelodictyon phaeoclathratiforme (strain DSM 5477 / BU-1).